Reading from the N-terminus, the 219-residue chain is 2-C-methyl-D-erythritol 4-phosphate cytidylyltransferase (219 aa).

Belongs to the IspD/TarI cytidylyltransferase family. IspD subfamily.

It catalyses the reaction 2-C-methyl-D-erythritol 4-phosphate + CTP + H(+) = 4-CDP-2-C-methyl-D-erythritol + diphosphate. The protein operates within isoprenoid biosynthesis; isopentenyl diphosphate biosynthesis via DXP pathway; isopentenyl diphosphate from 1-deoxy-D-xylulose 5-phosphate: step 2/6. Its function is as follows. Catalyzes the formation of 4-diphosphocytidyl-2-C-methyl-D-erythritol from CTP and 2-C-methyl-D-erythritol 4-phosphate (MEP). This Phocaeicola vulgatus (strain ATCC 8482 / DSM 1447 / JCM 5826 / CCUG 4940 / NBRC 14291 / NCTC 11154) (Bacteroides vulgatus) protein is 2-C-methyl-D-erythritol 4-phosphate cytidylyltransferase.